Consider the following 1226-residue polypeptide: DNA-directed RNA polymerase subunit beta (1226 aa).

Belongs to the RNA polymerase beta chain family. The RNAP catalytic core consists of 2 alpha, 1 beta, 1 beta' and 1 omega subunit. When a sigma factor is associated with the core the holoenzyme is formed, which can initiate transcription.

The enzyme catalyses RNA(n) + a ribonucleoside 5'-triphosphate = RNA(n+1) + diphosphate. Functionally, DNA-dependent RNA polymerase catalyzes the transcription of DNA into RNA using the four ribonucleoside triphosphates as substrates. The chain is DNA-directed RNA polymerase subunit beta from Leptospira interrogans serogroup Icterohaemorrhagiae serovar Lai (strain 56601).